A 165-amino-acid polypeptide reads, in one-letter code: 6,7-dimethyl-8-ribityllumazine synthase (165 aa).

Residues tryptophan 26, 58–60, and 80–82 contribute to the 5-amino-6-(D-ribitylamino)uracil site; these read SIE and VVI. 85 to 86 serves as a coordination point for (2S)-2-hydroxy-3-oxobutyl phosphate; sequence GT. Residue histidine 88 is the Proton donor of the active site. Asparagine 113 is a 5-amino-6-(D-ribitylamino)uracil binding site. Arginine 127 lines the (2S)-2-hydroxy-3-oxobutyl phosphate pocket.

This sequence belongs to the DMRL synthase family.

The catalysed reaction is (2S)-2-hydroxy-3-oxobutyl phosphate + 5-amino-6-(D-ribitylamino)uracil = 6,7-dimethyl-8-(1-D-ribityl)lumazine + phosphate + 2 H2O + H(+). It participates in cofactor biosynthesis; riboflavin biosynthesis; riboflavin from 2-hydroxy-3-oxobutyl phosphate and 5-amino-6-(D-ribitylamino)uracil: step 1/2. Functionally, catalyzes the formation of 6,7-dimethyl-8-ribityllumazine by condensation of 5-amino-6-(D-ribitylamino)uracil with 3,4-dihydroxy-2-butanone 4-phosphate. This is the penultimate step in the biosynthesis of riboflavin. This is 6,7-dimethyl-8-ribityllumazine synthase from Saccharopolyspora erythraea (strain ATCC 11635 / DSM 40517 / JCM 4748 / NBRC 13426 / NCIMB 8594 / NRRL 2338).